Consider the following 77-residue polypeptide: Acyl carrier protein (77 aa).

The region spanning 2–77 (AEVLEKVTKI…DAVKYIEANA (76 aa)) is the Carrier domain. O-(pantetheine 4'-phosphoryl)serine is present on Ser37.

The protein belongs to the acyl carrier protein (ACP) family. 4'-phosphopantetheine is transferred from CoA to a specific serine of apo-ACP by AcpS. This modification is essential for activity because fatty acids are bound in thioester linkage to the sulfhydryl of the prosthetic group.

The protein resides in the cytoplasm. It participates in lipid metabolism; fatty acid biosynthesis. In terms of biological role, carrier of the growing fatty acid chain in fatty acid biosynthesis. The protein is Acyl carrier protein of Listeria innocua serovar 6a (strain ATCC BAA-680 / CLIP 11262).